The chain runs to 175 residues: D-glycero-beta-D-manno-heptose-1,7-bisphosphate 7-phosphatase (175 aa).

Aspartate 7 acts as the Nucleophile in catalysis. Aspartate 7 and aspartate 9 together coordinate Mg(2+). Substrate-binding positions include 7–9 (DRD), 15–19 (DSDAY), and 50–53 (TNQS). Aspartate 9 (proton donor) is an active-site residue. Cysteine 89, histidine 91, cysteine 97, and cysteine 99 together coordinate Zn(2+). A substrate-binding site is contributed by 100-101 (RK). Position 126 (aspartate 126) interacts with Mg(2+).

Belongs to the gmhB family. Monomer. The cofactor is Mg(2+). Zn(2+) is required as a cofactor.

The protein localises to the cytoplasm. It carries out the reaction D-glycero-beta-D-manno-heptose 1,7-bisphosphate + H2O = D-glycero-beta-D-manno-heptose 1-phosphate + phosphate. It participates in nucleotide-sugar biosynthesis; ADP-L-glycero-beta-D-manno-heptose biosynthesis; ADP-L-glycero-beta-D-manno-heptose from D-glycero-beta-D-manno-heptose 7-phosphate: step 2/4. Its pathway is bacterial outer membrane biogenesis; LPS core biosynthesis. Converts the D-glycero-beta-D-manno-heptose 1,7-bisphosphate (beta-HBP) intermediate into D-glycero-beta-D-manno-heptose 1-phosphate by removing the phosphate group at the C-7 position. This is D-glycero-beta-D-manno-heptose-1,7-bisphosphate 7-phosphatase from Pseudomonas putida (strain ATCC 47054 / DSM 6125 / CFBP 8728 / NCIMB 11950 / KT2440).